A 441-amino-acid polypeptide reads, in one-letter code: 3-oxo-glucose-6-phosphate:glutamate aminotransferase (441 aa).

98 to 99 (TS) lines the substrate pocket. Position 125 to 126 (125 to 126 (GT)) interacts with pyridoxal 5'-phosphate. Phenylalanine 151 lines the substrate pocket. Residues glutamine 225 and serine 242 each coordinate pyridoxal 5'-phosphate. 244–246 (NPY) is a binding site for substrate. Lysine 247 carries the post-translational modification N6-(pyridoxal phosphate)lysine. The substrate site is built by tyrosine 274 and lysine 282. A pyridoxal 5'-phosphate-binding site is contributed by asparagine 292. Tyrosine 379 is a substrate binding site.

It belongs to the DegT/DnrJ/EryC1 family. Homodimer. Pyridoxal 5'-phosphate serves as cofactor.

The catalysed reaction is 3-dehydro-D-glucose 6-phosphate + L-glutamate = D-kanosamine 6-phosphate + 2-oxoglutarate. It functions in the pathway antibiotic biosynthesis; kanosamine biosynthesis. Functionally, involved in the biosynthesis of kanosamine (3-amino-3-deoxy-D-glucose), which is known to have antibiotic and antifungal properties, and to be a precursor of the antibiotic neotrehalosadiamine (3,3'-diamino-3,3'-dideoxy-alpha,beta-trehalose (NTD)). Catalyzes the reversible pyridoxal phosphate-dependent transamination of 3-dehydro-alpha-D-glucose 6-phosphate to form alpha-D-kanosamine-6-phosphate. It can only use alpha-anomer and glutamate is the only amino donor. The protein is 3-oxo-glucose-6-phosphate:glutamate aminotransferase (ntdA) of Bacillus subtilis (strain 168).